The sequence spans 61 residues: Metallothionein-1F (61 aa).

Methionine 1 carries the N-acetylmethionine modification. Residues 1 to 29 are beta; that stretch reads MDPNCSCAAGVSCTCAGSCKCKECKCTSC. Residues cysteine 5, cysteine 7, cysteine 13, cysteine 15, cysteine 19, cysteine 21, cysteine 24, cysteine 26, cysteine 29, cysteine 33, cysteine 34, cysteine 36, cysteine 37, cysteine 41, cysteine 44, cysteine 48, cysteine 50, and cysteine 57 each contribute to the a divalent metal cation site. The segment at 30–61 is alpha; the sequence is KKSCCSCCPVGCSKCAQGCVCKGASEKCSCCD. Serine 58 is modified (phosphoserine). Cysteine 59 and cysteine 60 together coordinate a divalent metal cation.

It belongs to the metallothionein superfamily. Type 1 family. Monomer.

Functionally, metallothioneins have a high content of cysteine residues that bind various heavy metals; these proteins are transcriptionally regulated by both heavy metals and glucocorticoids. The sequence is that of Metallothionein-1F (MT1F) from Homo sapiens (Human).